A 135-amino-acid polypeptide reads, in one-letter code: Ribosome-binding factor A (135 aa).

The protein belongs to the RbfA family. In terms of assembly, monomer. Binds 30S ribosomal subunits, but not 50S ribosomal subunits or 70S ribosomes.

It is found in the cytoplasm. Its function is as follows. One of several proteins that assist in the late maturation steps of the functional core of the 30S ribosomal subunit. Associates with free 30S ribosomal subunits (but not with 30S subunits that are part of 70S ribosomes or polysomes). Required for efficient processing of 16S rRNA. May interact with the 5'-terminal helix region of 16S rRNA. The polypeptide is Ribosome-binding factor A (Rhodopseudomonas palustris (strain HaA2)).